We begin with the raw amino-acid sequence, 653 residues long: ATP-dependent zinc metalloprotease FtsH 1 (653 aa).

The tract at residues 1 to 20 is disordered; the sequence is MPENKNDKENKNDKENKNTK. The Cytoplasmic segment spans residues 1 to 30; sequence MPENKNDKENKNDKENKNTKEEKKKVKFSN. The helical transmembrane segment at 31–51 threads the bilayer; it reads IIWVYIIFAVFFIGALISLNW. At 52–126 the chain is on the periplasmic side; the sequence is ENNPIISYSE…EYVESVGTKW (75 aa). Residues 127–147 traverse the membrane as a helical segment; that stretch reads WFGLLINIIPIVVMVLFFFWL. Residues 148-653 are Cytoplasmic-facing; the sequence is YRSASAGARS…VVNHVNYQPV (506 aa). 219 to 226 serves as a coordination point for ATP; it reads GPPGTGKT. H441 provides a ligand contact to Zn(2+). E442 is a catalytic residue. Residues H445 and D518 each coordinate Zn(2+).

This sequence in the central section; belongs to the AAA ATPase family. The protein in the C-terminal section; belongs to the peptidase M41 family. Homohexamer. Zn(2+) is required as a cofactor.

It localises to the cell inner membrane. Its function is as follows. Acts as a processive, ATP-dependent zinc metallopeptidase for both cytoplasmic and membrane proteins. Plays a role in the quality control of integral membrane proteins. This Petrotoga mobilis (strain DSM 10674 / SJ95) protein is ATP-dependent zinc metalloprotease FtsH 1.